Here is a 108-residue protein sequence, read N- to C-terminus: MGVEIETISPGDGRTFPKKGQICVVHYTGMLQNGKKFDSSRDRNKPFKFRIGKQEVIKGFEEGTAQMSLGQRAKLTCTPDVAYGATGHPGVIPPNATLIFDVELLSLE.

The 89-residue stretch at 20–108 (GQICVVHYTG…IFDVELLSLE (89 aa)) folds into the PPIase FKBP-type domain.

This sequence belongs to the FKBP-type PPIase family. FKBP1 subfamily. As to quaternary structure, identified in a complex composed of RYR2, FKBP1B, PKA catalytic subunit, PRKAR2A, AKAP6, and the protein phosphatases PP2A and PP1. Interacts directly with RYR2.

The protein resides in the cytoplasm. Its subcellular location is the sarcoplasmic reticulum. It carries out the reaction [protein]-peptidylproline (omega=180) = [protein]-peptidylproline (omega=0). Inhibited by both FK506 and rapamycin. Functionally, has the potential to contribute to the immunosuppressive and toxic effects of FK506 and rapamycin. PPIases accelerate the folding of proteins. It catalyzes the cis-trans isomerization of proline imidic peptide bonds in oligopeptides. This chain is Peptidyl-prolyl cis-trans isomerase FKBP1B (Fkbp1b), found in Mus musculus (Mouse).